A 519-amino-acid polypeptide reads, in one-letter code: Exodeoxyribonuclease 7 large subunit (519 aa).

The protein belongs to the XseA family. In terms of assembly, heterooligomer composed of large and small subunits.

The protein localises to the cytoplasm. The catalysed reaction is Exonucleolytic cleavage in either 5'- to 3'- or 3'- to 5'-direction to yield nucleoside 5'-phosphates.. In terms of biological role, bidirectionally degrades single-stranded DNA into large acid-insoluble oligonucleotides, which are then degraded further into small acid-soluble oligonucleotides. This chain is Exodeoxyribonuclease 7 large subunit, found in Cereibacter sphaeroides (strain ATCC 17025 / ATH 2.4.3) (Rhodobacter sphaeroides).